Consider the following 192-residue polypeptide: Xanthine phosphoribosyltransferase (192 aa).

Residues Leu20 and Asn27 each contribute to the xanthine site. 128-132 (AQGEA) serves as a coordination point for 5-phospho-alpha-D-ribose 1-diphosphate. A xanthine-binding site is contributed by Lys156.

This sequence belongs to the purine/pyrimidine phosphoribosyltransferase family. Xpt subfamily. As to quaternary structure, homodimer.

It localises to the cytoplasm. It catalyses the reaction XMP + diphosphate = xanthine + 5-phospho-alpha-D-ribose 1-diphosphate. It functions in the pathway purine metabolism; XMP biosynthesis via salvage pathway; XMP from xanthine: step 1/1. Converts the preformed base xanthine, a product of nucleic acid breakdown, to xanthosine 5'-monophosphate (XMP), so it can be reused for RNA or DNA synthesis. This chain is Xanthine phosphoribosyltransferase, found in Lactobacillus helveticus (strain DPC 4571).